A 167-amino-acid chain; its full sequence is Leptin (167 aa).

The N-terminal stretch at 1–21 is a signal peptide; it reads MHWGTLCGFLWLWPYLFYVQA. Cysteine 117 and cysteine 167 are disulfide-bonded.

It belongs to the leptin family. Interacts with SIGLEC6. Adipose tissue is the main source of leptin. It is also produced by other peripheral tissues such as the skeletal muscle. Expressed by intercalated and striated tracts of submandibular and parotid salivary gland intralobular ducts. Detected by fundic epithelium of the gastric mucosa. Secreted into blood and gastric juice.

The protein localises to the secreted. In terms of biological role, key player in the regulation of energy balance and body weight control. Once released into the circulation, has central and peripheral effects by binding LEPR, found in many tissues, which results in the activation of several major signaling pathways. In the hypothalamus, acts as an appetite-regulating factor that induces a decrease in food intake and an increase in energy consumption by inducing anorexinogenic factors and suppressing orexigenic neuropeptides, also regulates bone mass and secretion of hypothalamo-pituitary-adrenal hormones. In the periphery, increases basal metabolism, influences reproductive function, regulates pancreatic beta-cell function and insulin secretion, is pro-angiogenic for endothelial cell and affects innate and adaptive immunity. In the arcuate nucleus of the hypothalamus, activates by depolarization POMC neurons inducing FOS and SOCS3 expression to release anorexigenic peptides and inhibits by hyperpolarization NPY neurons inducing SOCS3 with a consequent reduction on release of orexigenic peptides. In addition to its known satiety inducing effect, has a modulatory role in nutrient absorption. In the intestine, reduces glucose absorption by enterocytes by activating PKC and leading to a sequential activation of p38, PI3K and ERK signaling pathways which exerts an inhibitory effect on glucose absorption. Acts as a growth factor on certain tissues, through the activation of different signaling pathways increases expression of genes involved in cell cycle regulation such as CCND1, via JAK2-STAT3 pathway, or VEGFA, via MAPK1/3 and PI3K-AKT1 pathways. May also play an apoptotic role via JAK2-STAT3 pathway and up-regulation of BIRC5 expression. Pro-angiogenic, has mitogenic activity on vascular endothelial cells and plays a role in matrix remodeling by regulating the expression of matrix metalloproteinases (MMPs) and tissue inhibitors of metalloproteinases (TIMPs). In innate immunity, modulates the activity and function of neutrophils by increasing chemotaxis and the secretion of oxygen radicals. Increases phagocytosis by macrophages and enhances secretion of pro-inflammatory mediators. Increases cytotoxic ability of NK cells. Plays a pro-inflammatory role, in synergy with IL1B, by inducing NOS2 which promotes the production of IL6, IL8 and Prostaglandin E2, through a signaling pathway that involves JAK2, PI3K, MAP2K1/MEK1 and MAPK14/p38. In adaptive immunity, promotes the switch of memory T-cells towards T helper-1 cell immune responses. Increases CD4(+)CD25(-) T-cell proliferation and reduces autophagy during TCR (T-cell receptor) stimulation, through MTOR signaling pathway activation and BCL2 up-regulation. This Homo sapiens (Human) protein is Leptin.